The primary structure comprises 386 residues: Paralemmin-1 (386 aa).

Positions 4-115 form a coiled coil; the sequence is VEANTLQQER…TKENLAEAAA (112 aa). 4 disordered regions span residues 21–40, 51–149, 240–290, and 321–378; these read RKRQ…DRRQ, ERWL…PMKA, EATA…TMIF, and DAES…AKKQ. Composition is skewed to basic and acidic residues over residues 24–40 and 68–95; these read QTEI…DRRQ and AMKK…RELE. The span at 97–116 shows a compositional bias: low complexity; the sequence is LENSSSVTSTKENLAEAAAP. Basic and acidic residues-rich tracts occupy residues 259–282, 322–334, and 365–377; these read PRRE…EPSR, AESK…KDHA, and EAKE…DAKK. S-palmitoyl cysteine attachment occurs at residues Cys-380 and Cys-382. Cys-383 is modified (cysteine methyl ester). A lipid anchor (S-farnesyl cysteine) is attached at Cys-383. Residues 384-386 constitute a propeptide, removed in mature form; that stretch reads TVM.

The protein belongs to the paralemmin family. Interacts with dopamine receptor DRD3. Post-translationally, phosphorylated. Expressed in the lens (at protein level). Highly expressed in forebrain and cerebellum with lower expression in adrenal gland and heart. Expression weak or undetectable in other tissues.

Its subcellular location is the cell membrane. The protein localises to the cell projection. It localises to the filopodium membrane. The protein resides in the axon. It is found in the dendrite. Its subcellular location is the dendritic spine. The protein localises to the basolateral cell membrane. It localises to the apicolateral cell membrane. Functionally, involved in plasma membrane dynamics and cell process formation. Isoform 1 and isoform 2 are necessary for axonal and dendritic filopodia induction, for dendritic spine maturation and synapse formation in a palmitoylation-dependent manner. The polypeptide is Paralemmin-1 (PALM) (Gallus gallus (Chicken)).